Reading from the N-terminus, the 274-residue chain is NH(3)-dependent NAD(+) synthetase (274 aa).

Position 46-53 (46-53 (GISGGQDS)) interacts with ATP. Asp-52 contributes to the Mg(2+) binding site. Arg-140 lines the deamido-NAD(+) pocket. An ATP-binding site is contributed by Thr-160. Glu-165 contacts Mg(2+). Deamido-NAD(+) is bound by residues Lys-173 and Asp-180. 2 residues coordinate ATP: Lys-189 and Thr-211. Position 260–261 (260–261 (HK)) interacts with deamido-NAD(+).

This sequence belongs to the NAD synthetase family. Homodimer.

It carries out the reaction deamido-NAD(+) + NH4(+) + ATP = AMP + diphosphate + NAD(+) + H(+). Its pathway is cofactor biosynthesis; NAD(+) biosynthesis; NAD(+) from deamido-NAD(+) (ammonia route): step 1/1. Functionally, catalyzes the ATP-dependent amidation of deamido-NAD to form NAD. Uses ammonia as a nitrogen source. The polypeptide is NH(3)-dependent NAD(+) synthetase (Streptococcus mutans serotype c (strain ATCC 700610 / UA159)).